The sequence spans 227 residues: Protein GET1 (227 aa).

Residues 1-3 (MSL) lie on the Lumenal side of the membrane. Residues 4–23 (LLTVFLIVFVTQLISWIGQN) form a helical membrane-spanning segment. Residues 24-107 (VLLEWAYNLY…SFSTKFNAVI (84 aa)) lie on the Cytoplasmic side of the membrane. Residues 72 to 96 (AKLRRSVDKGLAELEKLNSEIATAK) are a coiled coil. Residues 108-128 (WALTSGVNLVIGWWYGRKAVF) traverse the membrane as a helical segment. Over 129–151 (YLPEGWMGPLTWWFSFPFAPRGS) the chain is Lumenal. Residues 152 to 168 (VSVGVWSFACKRVLLVL) form a helical membrane-spanning segment. Residues 169-227 (ERMVKELFFAETQAKEVPVGFSPSSSSSSTPNPMSKASSGSPSPRRRTTVTVESEDEKS) are Cytoplasmic-facing. The interval 184 to 227 (EVPVGFSPSSSSSSTPNPMSKASSGSPSPRRRTTVTVESEDEKS) is disordered. Low complexity predominate over residues 190–211 (SPSSSSSSTPNPMSKASSGSPS).

The protein belongs to the WRB/GET1 family. In terms of assembly, interacts with GET3.

It localises to the endoplasmic reticulum membrane. In terms of biological role, required for the post-translational delivery of tail-anchored (TA) proteins to the endoplasmic reticulum. Acts as a membrane receptor for soluble GET3, which recognizes and selectively binds the transmembrane domain of TA proteins in the cytosol. The polypeptide is Protein GET1 (Coprinopsis cinerea (strain Okayama-7 / 130 / ATCC MYA-4618 / FGSC 9003) (Inky cap fungus)).